The chain runs to 819 residues: Glycine-rich domain-containing protein 1 (819 aa).

In terms of biological role, plays a regulatory role in abscisic acid (ABA) signaling and tolerance to abiotic stress during germination. May be involved in the regulation of the ABI transcriptional factors. The sequence is that of Glycine-rich domain-containing protein 1 from Arabidopsis thaliana (Mouse-ear cress).